The sequence spans 211 residues: Large ribosomal subunit protein uL4 (211 aa).

The segment covering 41-53 has biased composition (polar residues); the sequence is QAHSRQGTASTLT. The disordered stretch occupies residues 41–78; it reads QAHSRQGTASTLTRAEVRGGGRKPYKQKGTGRARQGTI. Positions 60-71 are enriched in basic residues; the sequence is GGRKPYKQKGTG.

Belongs to the universal ribosomal protein uL4 family. Part of the 50S ribosomal subunit.

Its function is as follows. One of the primary rRNA binding proteins, this protein initially binds near the 5'-end of the 23S rRNA. It is important during the early stages of 50S assembly. It makes multiple contacts with different domains of the 23S rRNA in the assembled 50S subunit and ribosome. Functionally, forms part of the polypeptide exit tunnel. The sequence is that of Large ribosomal subunit protein uL4 from Prochlorococcus marinus (strain MIT 9303).